A 182-amino-acid chain; its full sequence is R-phycoerythrin subunit beta (182 aa).

Cys82 is a (2R,3E)-phycoerythrobilin binding site.

It belongs to the phycobiliprotein family. As to quaternary structure, homodimer. Contains one covalently linked phycoerythrobilin chromophore.

Green-light absorbing phycoerythrin of unknown function. The polypeptide is R-phycoerythrin subunit beta (cpeB) (Prochlorococcus marinus (strain SARG / CCMP1375 / SS120)).